Consider the following 435-residue polypeptide: Zinc finger CCCH domain-containing protein 10 (435 aa).

The disordered stretch occupies residues 1–36; it reads MPDRDSYANGTGSSGGGPGGGGSEEASGAGTGSGGA. Gly residues predominate over residues 12–35; it reads GSSGGGPGGGGSEEASGAGTGSGG. 3 consecutive C3H1-type zinc fingers follow at residues 36 to 63, 73 to 99, and 134 to 161; these read ATSDAICRDFLRNVCKRGKRCRYRHPDM, KNEFIFCHDFQNKECSRPNCRFIHGSK, and KEEVPICRDFLKGDCQRGAKCKFRHLQR. The segment at 166–190 is disordered; that stretch reads DARGGGGTGGGGSTGSAPPGRRHDL. The span at 168–179 shows a compositional bias: gly residues; sequence RGGGGTGGGGST. Residues arginine 186 and arginine 187 each carry the omega-N-methylarginine modification. The stretch at 235-281 forms a coiled coil; sequence GVECRLLEEENALLRKRVEELKKQVSNLLATNEVLLEQNAQFRNQAK. The span at 315–331 shows a compositional bias: polar residues; sequence TTLSSQALQPRPVSQQE. The segment at 315–363 is disordered; sequence TTLSSQALQPRPVSQQELVAPTGAPAAPPTNAAPPAAPPPPPPHLNPEI. Residues 340 to 359 show a composition bias toward pro residues; it reads AAPPTNAAPPAAPPPPPPHL.

The protein resides in the nucleus. In terms of biological role, specific regulator of miRNA biogenesis. Binds, via the C3H1-type zinc finger domains, to the binding motif 5'-GCAGCGC-3' on microRNA pri-MIR143 and negatively regulates the processing to mature microRNA. This is Zinc finger CCCH domain-containing protein 10 (Zc3h10) from Mus musculus (Mouse).